The primary structure comprises 84 residues: ATP synthase subunit c (84 aa).

The next 2 helical transmembrane spans lie at 13–33 and 56–76; these read IAVG…WGLI and FIFA…GFWF.

Belongs to the ATPase C chain family. F-type ATPases have 2 components, F(1) - the catalytic core - and F(0) - the membrane proton channel. F(1) has five subunits: alpha(3), beta(3), gamma(1), delta(1), epsilon(1). F(0) has three main subunits: a(1), b(2) and c(10-14). The alpha and beta chains form an alternating ring which encloses part of the gamma chain. F(1) is attached to F(0) by a central stalk formed by the gamma and epsilon chains, while a peripheral stalk is formed by the delta and b chains.

The protein resides in the cell inner membrane. F(1)F(0) ATP synthase produces ATP from ADP in the presence of a proton or sodium gradient. F-type ATPases consist of two structural domains, F(1) containing the extramembraneous catalytic core and F(0) containing the membrane proton channel, linked together by a central stalk and a peripheral stalk. During catalysis, ATP synthesis in the catalytic domain of F(1) is coupled via a rotary mechanism of the central stalk subunits to proton translocation. Its function is as follows. Key component of the F(0) channel; it plays a direct role in translocation across the membrane. A homomeric c-ring of between 10-14 subunits forms the central stalk rotor element with the F(1) delta and epsilon subunits. This Acidithiobacillus ferrooxidans (strain ATCC 23270 / DSM 14882 / CIP 104768 / NCIMB 8455) (Ferrobacillus ferrooxidans (strain ATCC 23270)) protein is ATP synthase subunit c.